A 327-amino-acid chain; its full sequence is Ribonucleoside-diphosphate reductase small chain (327 aa).

D70, E101, and H104 together coordinate Fe cation. Y108 is an active-site residue. E164, E198, and H201 together coordinate Fe cation.

The protein belongs to the ribonucleoside diphosphate reductase small chain family. As to quaternary structure, heterotetramer composed of a homodimer of the large subunit (R1) and a homodimer of the small subunit (R2). Larger multisubunit protein complex are also active, composed of (R1)n(R2)n. Fe cation is required as a cofactor.

It catalyses the reaction a 2'-deoxyribonucleoside 5'-diphosphate + [thioredoxin]-disulfide + H2O = a ribonucleoside 5'-diphosphate + [thioredoxin]-dithiol. Ribonucleoside-diphosphate reductase holoenzyme provides the precursors necessary for viral DNA synthesis. Allows virus growth in non-dividing cells. Catalyzes the biosynthesis of deoxyribonucleotides from the corresponding ribonucleotides. This chain is Ribonucleoside-diphosphate reductase small chain, found in Ornithodoros (relapsing fever ticks).